The sequence spans 268 residues: 3-methyl-2-oxobutanoate hydroxymethyltransferase (268 aa).

2 residues coordinate Mg(2+): aspartate 44 and aspartate 83. 3-methyl-2-oxobutanoate contacts are provided by residues aspartate 44–serine 45, aspartate 83, and lysine 113. Glutamate 115 contributes to the Mg(2+) binding site. Residue glutamate 183 is the Proton acceptor of the active site.

Belongs to the PanB family. As to quaternary structure, homodecamer; pentamer of dimers. The cofactor is Mg(2+).

The protein localises to the cytoplasm. It carries out the reaction 3-methyl-2-oxobutanoate + (6R)-5,10-methylene-5,6,7,8-tetrahydrofolate + H2O = 2-dehydropantoate + (6S)-5,6,7,8-tetrahydrofolate. Its pathway is cofactor biosynthesis; (R)-pantothenate biosynthesis; (R)-pantoate from 3-methyl-2-oxobutanoate: step 1/2. Its function is as follows. Catalyzes the reversible reaction in which hydroxymethyl group from 5,10-methylenetetrahydrofolate is transferred onto alpha-ketoisovalerate to form ketopantoate. This is 3-methyl-2-oxobutanoate hydroxymethyltransferase from Leptospira biflexa serovar Patoc (strain Patoc 1 / Ames).